Here is a 565-residue protein sequence, read N- to C-terminus: Proline--tRNA ligase (565 aa).

Belongs to the class-II aminoacyl-tRNA synthetase family. ProS type 1 subfamily. As to quaternary structure, homodimer.

It localises to the cytoplasm. It carries out the reaction tRNA(Pro) + L-proline + ATP = L-prolyl-tRNA(Pro) + AMP + diphosphate. Catalyzes the attachment of proline to tRNA(Pro) in a two-step reaction: proline is first activated by ATP to form Pro-AMP and then transferred to the acceptor end of tRNA(Pro). As ProRS can inadvertently accommodate and process non-cognate amino acids such as alanine and cysteine, to avoid such errors it has two additional distinct editing activities against alanine. One activity is designated as 'pretransfer' editing and involves the tRNA(Pro)-independent hydrolysis of activated Ala-AMP. The other activity is designated 'posttransfer' editing and involves deacylation of mischarged Ala-tRNA(Pro). The misacylated Cys-tRNA(Pro) is not edited by ProRS. In Hydrogenobaculum sp. (strain Y04AAS1), this protein is Proline--tRNA ligase.